A 235-amino-acid chain; its full sequence is RNA polymerase sigma factor SigI7 (235 aa).

The Polymerase core binding motif lies at 49 to 62 (DELSIALMAFVETI). Residues 191-210 (VAEIEQSLKIPRKTIERARK) constitute a DNA-binding region (H-T-H motif).

Belongs to the sigma-70 factor family. SigI subfamily. As to quaternary structure, interacts with RsgI7.

Its subcellular location is the cytoplasm. Its activity is regulated as follows. Negatively regulated by the anti-sigma-I factor RsgI7. Sigma factors are initiation factors that promote the attachment of RNA polymerase to specific initiation sites and are then released. The polypeptide is RNA polymerase sigma factor SigI7 (Acetivibrio thermocellus (strain ATCC 27405 / DSM 1237 / JCM 9322 / NBRC 103400 / NCIMB 10682 / NRRL B-4536 / VPI 7372) (Clostridium thermocellum)).